A 210-amino-acid polypeptide reads, in one-letter code: Ribosomal RNA small subunit methyltransferase G (210 aa).

S-adenosyl-L-methionine is bound by residues Gly76, Leu81, 127-128 (VE), and Arg142.

This sequence belongs to the methyltransferase superfamily. RNA methyltransferase RsmG family.

Its subcellular location is the cytoplasm. The catalysed reaction is guanosine(527) in 16S rRNA + S-adenosyl-L-methionine = N(7)-methylguanosine(527) in 16S rRNA + S-adenosyl-L-homocysteine. Its function is as follows. Specifically methylates the N7 position of guanine in position 527 of 16S rRNA. The chain is Ribosomal RNA small subunit methyltransferase G from Vibrio cholerae serotype O1 (strain ATCC 39315 / El Tor Inaba N16961).